The primary structure comprises 119 residues: Large ribosomal subunit protein uL14 (119 aa).

It belongs to the universal ribosomal protein uL14 family. As to quaternary structure, part of the 50S ribosomal subunit. Forms a cluster with proteins L3 and L19. In the 70S ribosome, L14 and L19 interact and together make contacts with the 16S rRNA in bridges B5 and B8.

Functionally, binds to 23S rRNA. Forms part of two intersubunit bridges in the 70S ribosome. The sequence is that of Large ribosomal subunit protein uL14 from Wolbachia sp. subsp. Brugia malayi (strain TRS).